Reading from the N-terminus, the 111-residue chain is Small ribosomal subunit protein uS17 (111 aa).

Belongs to the universal ribosomal protein uS17 family. As to quaternary structure, part of the 30S ribosomal subunit.

Its function is as follows. One of the primary rRNA binding proteins, it binds specifically to the 5'-end of 16S ribosomal RNA. The chain is Small ribosomal subunit protein uS17 from Archaeoglobus fulgidus (strain ATCC 49558 / DSM 4304 / JCM 9628 / NBRC 100126 / VC-16).